Here is a 327-residue protein sequence, read N- to C-terminus: Thioredoxin reductase (327 aa).

FAD-binding positions include 10 to 13 (SGPA), 39 to 40 (IA), Gln44, Asn53, Val86, Cys143, Asp286, and 293 to 295 (RQA). Cysteines 140 and 143 form a disulfide.

This sequence belongs to the class-II pyridine nucleotide-disulfide oxidoreductase family. In terms of assembly, homodimer. It depends on FAD as a cofactor.

It is found in the cytoplasm. The enzyme catalyses [thioredoxin]-dithiol + NADP(+) = [thioredoxin]-disulfide + NADPH + H(+). Functionally, component of the thioredoxin-thioredoxin reductase system which may be involved in biosynthesis of penicillins and cephalosporins and may be important in determining the thiol-disulfide redox balance. The chain is Thioredoxin reductase (TRR1) from Pneumocystis jirovecii (Human pneumocystis pneumonia agent).